Reading from the N-terminus, the 110-residue chain is uncharacterized protein (110 aa).

Positions 1-72 are disordered; sequence MWRSSNQRGV…NHRNIHLRNP (72 aa). Residues 10-23 show a composition bias toward basic residues; sequence VSRRRDKSMRKYTR. Residues 48-57 are compositionally biased toward polar residues; the sequence is KNTYTGNISS.

This is an uncharacterized protein from Human herpesvirus 6A (strain Uganda-1102) (HHV-6 variant A).